A 213-amino-acid chain; its full sequence is Imidazole glycerol phosphate synthase subunit HisH 2 (213 aa).

Residues 4–211 (RLGLIDYGMG…LNWLETGAKP (208 aa)) form the Glutamine amidotransferase type-1 domain. Catalysis depends on Cys82, which acts as the Nucleophile. Catalysis depends on residues His186 and Glu188.

Heterodimer of HisH and HisF.

It is found in the cytoplasm. The enzyme catalyses 5-[(5-phospho-1-deoxy-D-ribulos-1-ylimino)methylamino]-1-(5-phospho-beta-D-ribosyl)imidazole-4-carboxamide + L-glutamine = D-erythro-1-(imidazol-4-yl)glycerol 3-phosphate + 5-amino-1-(5-phospho-beta-D-ribosyl)imidazole-4-carboxamide + L-glutamate + H(+). It carries out the reaction L-glutamine + H2O = L-glutamate + NH4(+). It participates in amino-acid biosynthesis; L-histidine biosynthesis; L-histidine from 5-phospho-alpha-D-ribose 1-diphosphate: step 5/9. IGPS catalyzes the conversion of PRFAR and glutamine to IGP, AICAR and glutamate. The HisH subunit provides the glutamine amidotransferase activity that produces the ammonia necessary to HisF for the synthesis of IGP and AICAR. The polypeptide is Imidazole glycerol phosphate synthase subunit HisH 2 (hisH2) (Prochlorococcus marinus (strain MIT 9313)).